The sequence spans 319 residues: MKEKRALFVAGPTCSGKSALALAVAERLGGTVINADSMQIYRELRILTARPDQEEEARVPHRLYGVLPASQPGSAAWWRDQAITAMEESWQQGRLPILCGGTGLYFHALMHGFADIPDPGEEARQEARSLLAELGPESLHARLAEADPATAARLKPQDSQRIARAWEVWRGTESGLSAWQNQPPRPLPGWDFAAIRIDPPREELRQAITARLHGMLDNGALAEVEALRVQALDPSLPAMRAHGVPEFLAFLRGDISLPEAMQRAAQATIRYTKRQATWFRNRPFVKPPFLYTIDARIASFQQLSERSMADMLNFIRAFH.

11–18 contributes to the ATP binding site; the sequence is GPTCSGKS. 13 to 18 serves as a coordination point for substrate; sequence TCSGKS. Interaction with substrate tRNA stretches follow at residues 36 to 39 and 160 to 164; these read DSMQ and QRIAR.

Belongs to the IPP transferase family. In terms of assembly, monomer. Requires Mg(2+) as cofactor.

The catalysed reaction is adenosine(37) in tRNA + dimethylallyl diphosphate = N(6)-dimethylallyladenosine(37) in tRNA + diphosphate. Functionally, catalyzes the transfer of a dimethylallyl group onto the adenine at position 37 in tRNAs that read codons beginning with uridine, leading to the formation of N6-(dimethylallyl)adenosine (i(6)A). The polypeptide is tRNA dimethylallyltransferase (Granulibacter bethesdensis (strain ATCC BAA-1260 / CGDNIH1)).